Here is a 103-residue protein sequence, read N- to C-terminus: ATP-dependent Clp protease adapter protein ClpS 2 (103 aa).

This sequence belongs to the ClpS family. As to quaternary structure, binds to the N-terminal domain of the chaperone ClpA.

Functionally, involved in the modulation of the specificity of the ClpAP-mediated ATP-dependent protein degradation. The sequence is that of ATP-dependent Clp protease adapter protein ClpS 2 from Agrobacterium fabrum (strain C58 / ATCC 33970) (Agrobacterium tumefaciens (strain C58)).